The following is a 400-amino-acid chain: Probable S-adenosylmethionine synthase (400 aa).

Residue 135-140 (KPGSKD) participates in ATP binding.

It belongs to the AdoMet synthase 2 family. It depends on Mg(2+) as a cofactor.

It catalyses the reaction L-methionine + ATP + H2O = S-adenosyl-L-methionine + phosphate + diphosphate. The protein operates within amino-acid biosynthesis; S-adenosyl-L-methionine biosynthesis; S-adenosyl-L-methionine from L-methionine: step 1/1. Catalyzes the formation of S-adenosylmethionine from methionine and ATP. This is Probable S-adenosylmethionine synthase (mat) from Aquifex aeolicus (strain VF5).